The sequence spans 347 residues: Quinolinate synthase (347 aa).

Positions 47 and 68 each coordinate iminosuccinate. [4Fe-4S] cluster is bound at residue Cys-113. Iminosuccinate contacts are provided by residues 139-141 and Ser-156; that span reads YAN. Cys-200 provides a ligand contact to [4Fe-4S] cluster. Iminosuccinate contacts are provided by residues 226-228 and Thr-243; that span reads HPE. Cys-297 serves as a coordination point for [4Fe-4S] cluster.

The protein belongs to the quinolinate synthase family. Type 1 subfamily. The cofactor is [4Fe-4S] cluster.

It localises to the cytoplasm. The enzyme catalyses iminosuccinate + dihydroxyacetone phosphate = quinolinate + phosphate + 2 H2O + H(+). The protein operates within cofactor biosynthesis; NAD(+) biosynthesis; quinolinate from iminoaspartate: step 1/1. Catalyzes the condensation of iminoaspartate with dihydroxyacetone phosphate to form quinolinate. The polypeptide is Quinolinate synthase (Enterobacter sp. (strain 638)).